We begin with the raw amino-acid sequence, 352 residues long: UDP-N-acetylglucosamine--N-acetylmuramyl-(pentapeptide) pyrophosphoryl-undecaprenol N-acetylglucosamine transferase 2 (352 aa).

UDP-N-acetyl-alpha-D-glucosamine contacts are provided by residues 11–13 (SAG), R164, S194, and Q289.

The protein belongs to the glycosyltransferase 28 family. MurG subfamily.

The protein localises to the cell membrane. It catalyses the reaction di-trans,octa-cis-undecaprenyl diphospho-N-acetyl-alpha-D-muramoyl-L-alanyl-D-glutamyl-meso-2,6-diaminopimeloyl-D-alanyl-D-alanine + UDP-N-acetyl-alpha-D-glucosamine = di-trans,octa-cis-undecaprenyl diphospho-[N-acetyl-alpha-D-glucosaminyl-(1-&gt;4)]-N-acetyl-alpha-D-muramoyl-L-alanyl-D-glutamyl-meso-2,6-diaminopimeloyl-D-alanyl-D-alanine + UDP + H(+). It participates in cell wall biogenesis; peptidoglycan biosynthesis. Cell wall formation. Catalyzes the transfer of a GlcNAc subunit on undecaprenyl-pyrophosphoryl-MurNAc-pentapeptide (lipid intermediate I) to form undecaprenyl-pyrophosphoryl-MurNAc-(pentapeptide)GlcNAc (lipid intermediate II). The sequence is that of UDP-N-acetylglucosamine--N-acetylmuramyl-(pentapeptide) pyrophosphoryl-undecaprenol N-acetylglucosamine transferase 2 from Bacillus cereus (strain ATCC 10987 / NRS 248).